Reading from the N-terminus, the 34-residue chain is Kappa-theraphotoxin-Sc1a (34 aa).

Cystine bridges form between C2–C16, C9–C21, and C15–C28. Isoleucine amide is present on I34.

This sequence belongs to the neurotoxin 10 (Hwtx-1) family. 57 (ScTx1) subfamily. Expressed by the venom gland.

The protein localises to the secreted. Acts as a gating-modifier to inhibit voltage-gated potassium channels. It inhibits delayed Kv2.1/KCNB1 (IC(50) is 12.7 nM), Kv2.1/Kv9.3 (IC(50) is 7.2 nM) (KCNB1/KCNS3), Kv2.2/KCNB2 (IC(50) is 21.4 nM), and transient Kv4.2/KCND2 (IC(50) is 1.2 nM) channels. The chain is Kappa-theraphotoxin-Sc1a from Stromatopelma calceatum (Featherleg baboon tarantula).